Here is a 1087-residue protein sequence, read N- to C-terminus: Synaptopodin-2 (1087 aa).

A PDZ domain is found at 6–88 (FICISMTGGA…SLHLLVKRPS (83 aa)). 3 disordered regions span residues 24–52 (GKEE…EGDE), 88–112 (SSGT…HEGP), and 207–272 (GPIV…AGLP). Positions 101–112 (TTNHQHLTHEGP) are enriched in basic and acidic residues. 2 stretches are compositionally biased toward polar residues: residues 207-230 (GPIV…SQLE) and 246-255 (TSLTSSTSSG). Residues Ser-300, Ser-319, and Ser-320 each carry the phosphoserine modification. The interval 320–359 (SEGTEHGEDQRSGKDQSRPHKHRARHARLRRSESLSEKQV) is disordered. Over residues 322–337 (GTEHGEDQRSGKDQSR) the composition is skewed to basic and acidic residues. Thr-323 is subject to Phosphothreonine. Over residues 338–348 (PHKHRARHARL) the composition is skewed to basic residues. Basic and acidic residues predominate over residues 349-359 (RRSESLSEKQV). Positions 388-396 (KKRRRRARK) match the Nuclear localization signal motif. 4 positions are modified to phosphoserine: Ser-540, Ser-541, Ser-543, and Ser-546. The tract at residues 551 to 557 (RSLASVP) is interaction with YWHAB. Phosphoserine; by PKA is present on Ser-555. Disordered stretches follow at residues 581 to 817 (AKPF…ALNL) and 832 to 863 (NYTP…GMSG). Phosphoserine is present on Ser-596. Residues 599-804 (RSVTSPISDF…AVSSIKIAQP (206 aa)) form an interaction with YWHAB region. Thr-602 carries the phosphothreonine; by PKA and CaMK2 modification. Ser-603 is subject to Phosphoserine. Pro residues-rich tracts occupy residues 609–622 (PAPP…PPPE) and 636–647 (AQPPPWPQPAPW). Positions 611–614 (PPPY) match the PPPY motif motif. Phosphotyrosine is present on Tyr-614. Position 618 is a phosphoserine (Ser-618). The tract at residues 656–796 (SEQIASRDER…PPNPPQVTAV (141 aa)) is F-actin binding. An F-actin bundling activity region spans residues 656–909 (SEQIASRDER…LPASWKYSSN (254 aa)). Interaction with ACTN2 stretches follow at residues 656 to 917 (SEQI…PPVA) and 894 to 1087 (QSPT…VVEE). Phosphoserine occurs at positions 697 and 719. The actin binding stretch occupies residues 740 to 893 (AKQKTPPPVA…DTVQAHTVRA (154 aa)). A Phosphothreonine modification is found at Thr-744. Over residues 751–777 (KPAVKSPSSSQPVAPVSPVWSPGVAPA) the composition is skewed to low complexity. Ser-767 and Ser-771 each carry phosphoserine. Positions 781–797 (AFSTSNPPNPPQVTAVS) are enriched in polar residues. The segment at 803 to 1087 (QPAAPPARPA…QVWKPSVVEE (285 aa)) is interaction with FLNC. Residues Ser-895, Ser-899, and Ser-903 each carry the phosphoserine modification. 3 disordered regions span residues 930–952 (AIKS…KKPL), 970–1012 (FTFQ…PTNA), and 1037–1060 (PVSA…STSY). An interaction with ZYX region spans residues 993–1012 (PAMKQALPPRQANVGSPTNA). 2 positions are modified to phosphoserine: Ser-1008 and Ser-1050. A compositionally biased stretch (low complexity) spans 1037–1051 (PVSASPVPVSVPTSP).

Belongs to the synaptopodin family. In terms of assembly, may self-associate in muscle cells under oxidative stress. Binds F-actin. Interacts with ACTN2; ACTN2 is proposed to anchor SYOP2 at Z lines in mature myocytes. Interacts with AKAP6, PPP3CA and CAMK2A. Interacts (phosphorylated form) with YWHAB; YWHAB competes with ACTN2 for interaction with SYNPO2. Interacts with KPNA2; mediating nuclear import of SYNOP2; dependent on interaction with YWHAB. Interacts with IPO13; may be implicated in SYNOP2 nuclear import. Interacts with ZYX, FLNC, ILK. Interacts with BAG3 (via WW 1 domain). May associate with the CASA complex consisting of HSPA8, HSPB8 and BAG3. Interacts with VPS18. In terms of processing, phosphorylated by PKA, and by CaMK2 at multiple sites. Dephosphorylated by calcineurin at Ser-555 and Thr-602; abrogating interaction with YWHAB and impairing nuclear import. In terms of tissue distribution, expressed in skeletal muscle, heart, colon, stomach, uterus and lung. Expression is restricted to muscle cell layers in colon, uterus and stomach.

The protein localises to the nucleus. It localises to the cytoplasm. Its subcellular location is the myofibril. The protein resides in the sarcomere. It is found in the z line. The protein localises to the cell junction. It localises to the focal adhesion. Functionally, has an actin-binding and actin-bundling activity. Can induce the formation of F-actin networks. At the sarcomeric Z lines is proposed to act as adapter protein that links nascent myofibers to the sarcolemma via ZYX and may play a role in early assembly and stabilization of the Z lines. Involved in autophagosome formation. May play a role in chaperone-assisted selective autophagy (CASA) involved in Z lines maintenance in striated muscle under mechanical tension; may link the client-processing CASA chaperone machinery to a membrane-tethering and fusion complex providing autophagosome membranes. Involved in regulation of cell migration. May be a tumor suppressor. This is Synaptopodin-2 (Synpo2) from Mus musculus (Mouse).